The sequence spans 344 residues: Fructose-1,6-bisphosphatase class 1 (344 aa).

Positions 91, 110, 112, and 113 each coordinate Mg(2+). Substrate contacts are provided by residues 113–116 (DGSS) and Asn-200. Glu-272 is a binding site for Mg(2+).

It belongs to the FBPase class 1 family. In terms of assembly, homotetramer. The cofactor is Mg(2+).

The protein localises to the cytoplasm. The catalysed reaction is beta-D-fructose 1,6-bisphosphate + H2O = beta-D-fructose 6-phosphate + phosphate. It participates in carbohydrate biosynthesis; Calvin cycle. The polypeptide is Fructose-1,6-bisphosphatase class 1 (Rhodopseudomonas palustris (strain BisA53)).